Here is a 346-residue protein sequence, read N- to C-terminus: Biotin synthase (346 aa).

Residues arginine 38–threonine 256 form the Radical SAM core domain. Cysteine 53, cysteine 57, and cysteine 60 together coordinate [4Fe-4S] cluster. Residues cysteine 97, cysteine 128, cysteine 188, and arginine 260 each contribute to the [2Fe-2S] cluster site.

This sequence belongs to the radical SAM superfamily. Biotin synthase family. As to quaternary structure, homodimer. [4Fe-4S] cluster is required as a cofactor. It depends on [2Fe-2S] cluster as a cofactor.

It catalyses the reaction (4R,5S)-dethiobiotin + (sulfur carrier)-SH + 2 reduced [2Fe-2S]-[ferredoxin] + 2 S-adenosyl-L-methionine = (sulfur carrier)-H + biotin + 2 5'-deoxyadenosine + 2 L-methionine + 2 oxidized [2Fe-2S]-[ferredoxin]. The protein operates within cofactor biosynthesis; biotin biosynthesis; biotin from 7,8-diaminononanoate: step 2/2. In terms of biological role, catalyzes the conversion of dethiobiotin (DTB) to biotin by the insertion of a sulfur atom into dethiobiotin via a radical-based mechanism. The polypeptide is Biotin synthase (Cronobacter sakazakii (strain ATCC BAA-894) (Enterobacter sakazakii)).